Here is a 436-residue protein sequence, read N- to C-terminus: S-locus-specific glycoprotein S6 (436 aa).

An N-terminal signal peptide occupies residues 1 to 31 (MKGVRKPYDNSYTLSFLLVFFVLILFCPAFS). A Bulb-type lectin domain is found at 34-156 (TLSSTESLRI…SNNDASEYLW (123 aa)). N-linked (GlcNAc...) asparagine glycans are attached at residues Asn-46, Asn-64, Asn-114, Asn-121, Asn-245, Asn-261, and Asn-390. The PAN domain occupies 351 to 431 (CSGDGFTRMK…HGQDLYVRLA (81 aa)). Intrachain disulfides connect Cys-381-Cys-406 and Cys-389-Cys-391.

As to expression, stigma.

Involved in sporophytic self-incompatibility system (the inability of flowering plants to achieve self-fertilization). The protein is S-locus-specific glycoprotein S6 (SLSG) of Brassica oleracea (Wild cabbage).